The chain runs to 443 residues: Chromosomal replication initiator protein DnaA (443 aa).

The segment at 1–67 (MDAWSRSLER…RELLAHFAGF (67 aa)) is domain I, interacts with DnaA modulators. Positions 67–105 (FSDVFLEIGSRPRPVEAQNAPFSTPSAHVSSEPQVPFAG) are domain II. Residues 106-323 (NLDNHYTFAN…GALNTLTARA (218 aa)) are domain III, AAA+ region. The ATP site is built by G151, G153, K154, and T155. The tract at residues 324 to 443 (NFTGRAITTE…WDKLIRKLSE (120 aa)) is domain IV, binds dsDNA.

This sequence belongs to the DnaA family. Oligomerizes as a right-handed, spiral filament on DNA at oriC.

It localises to the cytoplasm. Its function is as follows. Plays an essential role in the initiation and regulation of chromosomal replication. ATP-DnaA binds to the origin of replication (oriC) to initiate formation of the DNA replication initiation complex once per cell cycle. Binds the DnaA box (a 9 base pair repeat at the origin) and separates the double-stranded (ds)DNA. Forms a right-handed helical filament on oriC DNA; dsDNA binds to the exterior of the filament while single-stranded (ss)DNA is stabiized in the filament's interior. The ATP-DnaA-oriC complex binds and stabilizes one strand of the AT-rich DNA unwinding element (DUE), permitting loading of DNA polymerase. After initiation quickly degrades to an ADP-DnaA complex that is not apt for DNA replication. Binds acidic phospholipids. In Stenotrophomonas maltophilia (strain R551-3), this protein is Chromosomal replication initiator protein DnaA.